The chain runs to 741 residues: T-box transcription factor TBX3 (741 aa).

Positions 107-220 (LEAKELWDQF…NNISDKHGFT (114 aa)) form a DNA-binding region, T-box; first part. A DNA-binding region (T-box; second part) is located at residues 241–305 (ILNSMHKYQP…NNPFAKGFRD (65 aa)). Ser369 is subject to Phosphoserine. The segment at 369-469 (SEAESDAEAE…EGPVATKVDE (101 aa)) is disordered. Basic and acidic residues-rich tracts occupy residues 377-386 (AESKEEHGPE) and 420-437 (SRAR…DSRH). Ser432, Ser438, Ser456, Ser705, Ser736, Ser738, and Ser740 each carry phosphoserine. A compositionally biased stretch (polar residues) spans 438–447 (SPATISSSTR).

As to quaternary structure, interacts with PML. As to expression, in adults, highest levels in lung. Also found in brain, heart, kidney, liver and ovary.

It is found in the nucleus. In terms of biological role, transcriptional repressor involved in developmental processes. Binds to the palindromic T site 5'-TTCACACCTAGGTGTGAA-3' DNA sequence, or a half-site, which are present in the regulatory region of several genes. Probably plays a role in limb pattern formation. Required for mammary placode induction, and maintenance of the mammary buds during development. Involved in branching morphogenesis in both developing lungs and adult mammary glands, via negative modulation of target genes; acting redundantly with TBX2. Required, together with TBX2, to maintain cell proliferation in the embryonic lung mesenchyme; perhaps acting downstream of SHH, BMP and TGFbeta signaling. Involved in modulating early inner ear development, acting independently of, and also redundantly with, TBX2 in different subregions of the developing ear. Acts as a negative regulator of PML function in cellular senescence. The chain is T-box transcription factor TBX3 (Tbx3) from Mus musculus (Mouse).